Here is a 301-residue protein sequence, read N- to C-terminus: Ribosomal RNA small subunit methyltransferase A (301 aa).

S-adenosyl-L-methionine is bound by residues Asn18, Leu20, Gly45, Glu66, Asp91, and Asn112. The tract at residues 267 to 301 is disordered; the sequence is PPEAAPVKEKRRMAKNKMTEPANNNLNENSAPEVD. The segment covering 287–301 has biased composition (polar residues); the sequence is PANNNLNENSAPEVD.

It belongs to the class I-like SAM-binding methyltransferase superfamily. rRNA adenine N(6)-methyltransferase family. RsmA subfamily.

It is found in the cytoplasm. The catalysed reaction is adenosine(1518)/adenosine(1519) in 16S rRNA + 4 S-adenosyl-L-methionine = N(6)-dimethyladenosine(1518)/N(6)-dimethyladenosine(1519) in 16S rRNA + 4 S-adenosyl-L-homocysteine + 4 H(+). Specifically dimethylates two adjacent adenosines (A1518 and A1519) in the loop of a conserved hairpin near the 3'-end of 16S rRNA in the 30S particle. May play a critical role in biogenesis of 30S subunits. This Colwellia psychrerythraea (strain 34H / ATCC BAA-681) (Vibrio psychroerythus) protein is Ribosomal RNA small subunit methyltransferase A.